Reading from the N-terminus, the 209-residue chain is Neurotrophin-4 (209 aa).

A signal peptide spans 1 to 21; sequence MLPRHSCSLLLFLFLLPSVPM. Residues 22–79 constitute a propeptide that is removed on maturation; that stretch reads EPHPPSSTLPPFLAPEWDLLSPRVALSRGAPAGPPLLFLLEAGAYGEPAGAPANRSRR. N75 carries an N-linked (GlcNAc...) asparagine glycan. 3 disulfides stabilise this stretch: C96-C169, C140-C198, and C157-C200.

This sequence belongs to the NGF-beta family.

The protein resides in the secreted. Its function is as follows. Target-derived survival factor for peripheral sensory sympathetic neurons. May promote ameloblast differentiation and subsequent reduction in proliferation of ameloblasts. The polypeptide is Neurotrophin-4 (Ntf4) (Mus musculus (Mouse)).